A 541-amino-acid polypeptide reads, in one-letter code: AT-rich interactive domain-containing protein 3A (541 aa).

Residues 17–172 are disordered; that stretch reads RLQQELEARQ…KHPNPQAFPT (156 aa). Positions 55 to 73 are enriched in low complexity; that stretch reads LKIQRAQAAALAAMRAAAA. The segment covering 84–102 has biased composition (acidic residues); it reads SDEEEEDGESMASDEEDEK. Residues 103-112 show a composition bias toward basic and acidic residues; it reads ERDGESERYP. The span at 115–144 shows a compositional bias: acidic residues; it reads GSEEEDLKGKWDEDDFEDEGEEDDYEDMEE. The 93-residue stretch at 212–304 folds into the ARID domain; sequence DPKRKEFLDD…YLYPYECEKR (93 aa). Residues 407 to 501 enclose the REKLES domain; sequence AALEQLREKL…GVLFAQPPTS (95 aa). The important for nuclear localization stretch occupies residues 408-450; sequence ALEQLREKLESGEPPEKKMALGTEEQQRLQRAIQHNLLAMTAQ. Positions 452–473 are homodimerization; sequence PMNIRINSQAEGRQDSAVNLTT. Residues 497–504 form an important for cytoplasmic localization region; the sequence is QPPTSASG. A disordered region spans residues 499 to 541; that stretch reads PTSASGTSKGSSNRTGSIGGGSSTSQAAPPPAPSAPTSNNPSP.

As to quaternary structure, homodimer.

It localises to the nucleus. The protein resides in the cytoplasm. In terms of biological role, transcription factor required for smad1 and smad2-mediated responses to TGFbeta during mesoderm induction. The chain is AT-rich interactive domain-containing protein 3A (arid3a) from Xenopus tropicalis (Western clawed frog).